The chain runs to 360 residues: Cytochrome b-c1 complex subunit 2, mitochondrial (360 aa).

A mitochondrion-targeting transit peptide spans 1 to 15 (MLSSRLQFAQQTARK).

The protein belongs to the peptidase M16 family. UQCRC2/QCR2 subfamily. As to quaternary structure, component of the ubiquinol-cytochrome c oxidoreductase (cytochrome b-c1 complex, complex III, CIII), a multisubunit enzyme composed of 3 respiratory subunits cytochrome b, cytochrome c1 and Rieske protein, 2 core protein subunits, and additional low-molecular weight protein subunits. The complex exists as an obligatory dimer and forms supercomplexes (SCs) in the inner mitochondrial membrane with cytochrome c oxidase (complex IV, CIV).

The protein localises to the mitochondrion inner membrane. Component of the ubiquinol-cytochrome c oxidoreductase, a multisubunit transmembrane complex that is part of the mitochondrial electron transport chain which drives oxidative phosphorylation. The respiratory chain contains 3 multisubunit complexes succinate dehydrogenase (complex II, CII), ubiquinol-cytochrome c oxidoreductase (cytochrome b-c1 complex, complex III, CIII) and cytochrome c oxidase (complex IV, CIV), that cooperate to transfer electrons derived from NADH and succinate to molecular oxygen, creating an electrochemical gradient over the inner membrane that drives transmembrane transport and the ATP synthase. The cytochrome b-c1 complex catalyzes electron transfer from ubiquinol to cytochrome c, linking this redox reaction to translocation of protons across the mitochondrial inner membrane, with protons being carried across the membrane as hydrogens on the quinol. In the process called Q cycle, 2 protons are consumed from the matrix, 4 protons are released into the intermembrane space and 2 electrons are passed to cytochrome c. This chain is Cytochrome b-c1 complex subunit 2, mitochondrial (QCR2), found in Kluyveromyces lactis (strain ATCC 8585 / CBS 2359 / DSM 70799 / NBRC 1267 / NRRL Y-1140 / WM37) (Yeast).